Here is a 227-residue protein sequence, read N- to C-terminus: MSDFQWRFIDFALQYDVLRFGNFRTKAGRPSPYFFNAGLFNDGFALKQLGQFYAQAILASGIRFDALFGPAYKGIPLVSTIAIALAEAGHNHPFSFNRKEIKDHGEGGDIVGAPLAGRILIVDDVVSAGLSVGESITLIHAAGATPCGIMVALDRMEKGKSECSTLQEIKNKYDIPVISLITLDDIIAYLHTRQDLVHHIPAIETYRTFYGAKVPDTVNHTGRSTSV.

Lysine 26 contributes to the 5-phospho-alpha-D-ribose 1-diphosphate binding site. 34–35 serves as a coordination point for orotate; sequence FF. Residues 72-73, arginine 98, lysine 99, lysine 102, histidine 104, and 123-131 each bind 5-phospho-alpha-D-ribose 1-diphosphate; these read YK and DDVVSAGLS. Serine 127 and arginine 155 together coordinate orotate.

The protein belongs to the purine/pyrimidine phosphoribosyltransferase family. PyrE subfamily. Homodimer. Mg(2+) is required as a cofactor.

It carries out the reaction orotidine 5'-phosphate + diphosphate = orotate + 5-phospho-alpha-D-ribose 1-diphosphate. It participates in pyrimidine metabolism; UMP biosynthesis via de novo pathway; UMP from orotate: step 1/2. Its function is as follows. Catalyzes the transfer of a ribosyl phosphate group from 5-phosphoribose 1-diphosphate to orotate, leading to the formation of orotidine monophosphate (OMP). The chain is Orotate phosphoribosyltransferase from Nitrosomonas europaea (strain ATCC 19718 / CIP 103999 / KCTC 2705 / NBRC 14298).